We begin with the raw amino-acid sequence, 1010 residues long: BrkA autotransporter (1010 aa).

An N-terminal signal peptide occupies residues 1 to 42 (MYLDRFRQCPSSLQIPRSAWRLHALAAALALAGMARLAPAAA). The Autotransporter domain maps to 742-1010 (LRADAGGPWA…SFHAGYRYSF (269 aa)).

The protein resides in the periplasm. It is found in the secreted. It localises to the cell surface. The protein localises to the cell outer membrane. Functionally, inhibits the classical pathway of complement activation and prevents accumulation of deposited C4. The polypeptide is BrkA autotransporter (Bordetella pertussis (strain Tohama I / ATCC BAA-589 / NCTC 13251)).